The chain runs to 264 residues: Ion-translocating oxidoreductase complex subunit B (264 aa).

A helical membrane pass occupies residues 5 to 25 (LINSIAVLAGLGFAVGVMLVI). One can recognise a 4Fe-4S domain in the interval 33–92 (DSNPLIDDVASLLPGANCGGCGFAGCAACAEAIVEQGAPVNSCPVGGFEVAKQIGALLGQ). 20 residues coordinate [4Fe-4S] cluster: Cys-50, Cys-53, Cys-58, Cys-75, Cys-138, Cys-142, Cys-148, Cys-152, Cys-172, Cys-175, Cys-178, Cys-182, Cys-217, Cys-220, Cys-223, Cys-227, Cys-246, Cys-249, Cys-252, and Cys-256. 4 4Fe-4S ferredoxin-type domains span residues 127-162 (VALM…MGED), 163-192 (GFPV…FARD), 207-236 (KDVK…RVTE), and 237-264 (FLAE…IELR).

Belongs to the 4Fe4S bacterial-type ferredoxin family. RnfB subfamily. As to quaternary structure, the Rnf complex is probably composed of eight subunits, including RnfA, RnfB, RnfC, RnfD, RnfE and RnfG. [4Fe-4S] cluster is required as a cofactor.

It localises to the cell membrane. In terms of biological role, part of a membrane-bound complex that couples electron transfer with translocation of ions across the membrane. Catalyzes Na(+) transport, most probably coupled to electron transfer from reduced ferredoxin to methanophenazine and heterodisulfide reductase. Involved in heterodisulfide reduction during methanogenesis from acetate. This Methanosarcina acetivorans (strain ATCC 35395 / DSM 2834 / JCM 12185 / C2A) protein is Ion-translocating oxidoreductase complex subunit B.